A 563-amino-acid polypeptide reads, in one-letter code: Merozoite receptor PK66 (563 aa).

The signal sequence occupies residues 1-13; the sequence is MNKIYYILFLSAQ. The Extracellular portion of the chain corresponds to 14 to 487; it reads CLVHMGKCER…DGKHKKKMLL (474 aa). N-linked (GlcNAc...) asparagine glycosylation is found at Asn-36, Asn-107, Asn-176, Asn-189, Asn-238, and Asn-441. Residues 488-508 form a helical membrane-spanning segment; sequence IIIGVTGAVCVVAVASLFYFR. Residues 509–563 are Cytoplasmic-facing; the sequence is KKAQDDKYDKMDQAEAYGKTANTRKDEMLDPEASFWGEDKRASHTTPVLMEKPYY.

Belongs to the apicomplexan parasites AMA1 family.

It localises to the membrane. In terms of biological role, merozoite receptor PK66 is a surface antigen involved in parasite invasion of erythrocytes. This chain is Merozoite receptor PK66 (PK66), found in Plasmodium knowlesi (strain nuri).